The sequence spans 441 residues: Ribosomal protein uS12 methylthiotransferase RimO (441 aa).

Residues 8 to 118 (PKIGFVSLGC…VLQHVHHYVP (111 aa)) form the MTTase N-terminal domain. [4Fe-4S] cluster contacts are provided by C17, C53, C82, C150, C154, and C157. One can recognise a Radical SAM core domain in the interval 136 to 373 (LTPRHYAYLK…MQLQQQISAE (238 aa)). The 66-residue stretch at 376–441 (QEKVGREILV…DEYDLWGSRV (66 aa)) folds into the TRAM domain.

It belongs to the methylthiotransferase family. RimO subfamily. [4Fe-4S] cluster is required as a cofactor.

The protein localises to the cytoplasm. It carries out the reaction L-aspartate(89)-[ribosomal protein uS12]-hydrogen + (sulfur carrier)-SH + AH2 + 2 S-adenosyl-L-methionine = 3-methylsulfanyl-L-aspartate(89)-[ribosomal protein uS12]-hydrogen + (sulfur carrier)-H + 5'-deoxyadenosine + L-methionine + A + S-adenosyl-L-homocysteine + 2 H(+). In terms of biological role, catalyzes the methylthiolation of an aspartic acid residue of ribosomal protein uS12. This is Ribosomal protein uS12 methylthiotransferase RimO from Salmonella paratyphi B (strain ATCC BAA-1250 / SPB7).